A 309-amino-acid polypeptide reads, in one-letter code: 2-phospho-L-lactate transferase (309 aa).

The 7,8-didemethyl-8-hydroxy-5-deazariboflavin site is built by Asp50 and Arg89.

This sequence belongs to the CofD family. As to quaternary structure, homodimer. The cofactor is Mg(2+).

The catalysed reaction is (2S)-lactyl-2-diphospho-5'-guanosine + 7,8-didemethyl-8-hydroxy-5-deazariboflavin = oxidized coenzyme F420-0 + GMP + H(+). It functions in the pathway cofactor biosynthesis; coenzyme F420 biosynthesis. Catalyzes the transfer of the 2-phospholactate moiety from (2S)-lactyl-2-diphospho-5'-guanosine to 7,8-didemethyl-8-hydroxy-5-deazariboflavin (FO) with the formation of oxidized coenzyme F420-0 and GMP. This is 2-phospho-L-lactate transferase from Methanococcus maripaludis (strain DSM 14266 / JCM 13030 / NBRC 101832 / S2 / LL).